A 398-amino-acid polypeptide reads, in one-letter code: Arylacetamide deacetylase (398 aa).

The Cytoplasmic segment spans residues 1-5 (MGKTI). A helical; Signal-anchor for type II membrane protein membrane pass occupies residues 6–26 (SLLISVVLVAYYLYIPLPDAI). At 27–398 (EEPWKVVWET…QYLSWLIKNL (372 aa)) the chain is on the lumenal side. The short motif at 110 to 112 (HGG) is the Involved in the stabilization of the negatively charged intermediate by the formation of the oxyanion hole element. An intrachain disulfide couples C115 to C339. The active site involves S188. N-linked (GlcNAc...) asparagine glycosylation occurs at N281. Residues D342 and H372 contribute to the active site.

Belongs to the 'GDXG' lipolytic enzyme family. N-glycosylated. As to expression, highest levels in liver with lower levels in jejunum and kidney.

It is found in the endoplasmic reticulum membrane. The protein resides in the microsome membrane. It carries out the reaction a triacylglycerol + H2O = a diacylglycerol + a fatty acid + H(+). Its function is as follows. Displays cellular triglyceride lipase activity in liver, increases the levels of intracellular fatty acids derived from the hydrolysis of newly formed triglyceride stores and plays a role in very low-density lipoprotein assembly. Displays serine esterase activity in liver. Deacetylates a variety of arylacetamide substrates, including xenobiotic compounds and procarcinogens, converting them to the primary arylamide compounds and increasing their toxicity. The chain is Arylacetamide deacetylase (Aadac) from Mus musculus (Mouse).